Consider the following 319-residue polypeptide: tRNA uridine(34) hydroxylase (319 aa).

A Rhodanese domain is found at 127-221; sequence KQEDTVIIDA…YGKDPEVQGE (95 aa). The Cysteine persulfide intermediate role is filled by cysteine 181.

The protein belongs to the TrhO family.

It carries out the reaction uridine(34) in tRNA + AH2 + O2 = 5-hydroxyuridine(34) in tRNA + A + H2O. Catalyzes oxygen-dependent 5-hydroxyuridine (ho5U) modification at position 34 in tRNAs. This is tRNA uridine(34) hydroxylase from Bacillus anthracis (strain A0248).